Consider the following 171-residue polypeptide: ATP synthase subunit b (171 aa).

Residues 24-44 (INLVIVIGVLYWFLKGFLGGI) traverse the membrane as a helical segment.

The protein belongs to the ATPase B chain family. As to quaternary structure, F-type ATPases have 2 components, F(1) - the catalytic core - and F(0) - the membrane proton channel. F(1) has five subunits: alpha(3), beta(3), gamma(1), delta(1), epsilon(1). F(0) has four main subunits: a(1), b(1), b'(1) and c(10-14). The alpha and beta chains form an alternating ring which encloses part of the gamma chain. F(1) is attached to F(0) by a central stalk formed by the gamma and epsilon chains, while a peripheral stalk is formed by the delta, b and b' chains.

Its subcellular location is the cellular thylakoid membrane. Functionally, f(1)F(0) ATP synthase produces ATP from ADP in the presence of a proton or sodium gradient. F-type ATPases consist of two structural domains, F(1) containing the extramembraneous catalytic core and F(0) containing the membrane proton channel, linked together by a central stalk and a peripheral stalk. During catalysis, ATP synthesis in the catalytic domain of F(1) is coupled via a rotary mechanism of the central stalk subunits to proton translocation. Component of the F(0) channel, it forms part of the peripheral stalk, linking F(1) to F(0). The polypeptide is ATP synthase subunit b (Synechococcus sp. (strain WH7803)).